The sequence spans 297 residues: uncharacterized protein (297 aa).

Glutamate 46 is a catalytic residue.

This sequence belongs to the PhzF family. In terms of assembly, homodimer and homotetramer.

This is an uncharacterized protein from Salmonella typhimurium (strain LT2 / SGSC1412 / ATCC 700720).